Reading from the N-terminus, the 260-residue chain is Late transcription factor 1 (260 aa).

It belongs to the chordopoxvirinae VLTF-1 family. As to quaternary structure, interacts with the late transcription factors VLTF-2 and VLTF-3. Interacts with the late transcription elongation factor VLTF-4. Interacts with itself.

Functionally, associates with RNA polymerase to initiate transcription from late gene promoters. The sequence is that of Late transcription factor 1 (OPG093) from Homo sapiens (Human).